Here is a 254-residue protein sequence, read N- to C-terminus: Triosephosphate isomerase (254 aa).

9–11 (NWK) is a binding site for substrate. His-96 functions as the Electrophile in the catalytic mechanism. Glu-168 serves as the catalytic Proton acceptor. Substrate-binding residues include Gly-174 and Ser-213.

The protein belongs to the triosephosphate isomerase family. As to quaternary structure, homodimer.

The protein resides in the cytoplasm. The enzyme catalyses D-glyceraldehyde 3-phosphate = dihydroxyacetone phosphate. It functions in the pathway carbohydrate biosynthesis; gluconeogenesis. It participates in carbohydrate degradation; glycolysis; D-glyceraldehyde 3-phosphate from glycerone phosphate: step 1/1. Involved in the gluconeogenesis. Catalyzes stereospecifically the conversion of dihydroxyacetone phosphate (DHAP) to D-glyceraldehyde-3-phosphate (G3P). In Buchnera aphidicola subsp. Schizaphis graminum (strain Sg), this protein is Triosephosphate isomerase.